A 235-amino-acid polypeptide reads, in one-letter code: Small capsomere-interacting protein (235 aa).

The interval 104–235 is disordered; it reads PRIIRPQPPN…SGNASRSRRV (132 aa). Polar residues predominate over residues 127 to 139; the sequence is PQKTQSADQSALQ. Over residues 158–188 the composition is skewed to low complexity; the sequence is TTSASVGQQQHVVSGSSGQQPQQGAQSSTVQ. Residues 220–235 show a composition bias toward polar residues; it reads LSHTGQSGNASRSRRV.

It belongs to the herpesviridae small capsomere-interacting protein family. In terms of assembly, interacts with the major capsid protein/MCP.

It is found in the virion. The protein resides in the host nucleus. Participates in the assembly of the infectious particles by decorating the outer surface of the capsid shell and thus forming a layer between the capsid and the tegument. Complexes composed of the capsid protein VP5 and VP26 assemble together in the host cytoplasm and are translocated to the nucleus, where they accumulate and participate in capsid assembly. In terms of biological role, participates in the assembly of the infectious particles by decorating the outer surface of the capsid shell and thus forming a layer between the capsid and the tegument. Complexes composed of the major capsid protein and small capsomere-interacting protein/SCP assemble together in the host cytoplasm and are translocated to the nucleus, where they accumulate and participate in capsid assembly. The sequence is that of Small capsomere-interacting protein from Homo sapiens (Human).